A 397-amino-acid chain; its full sequence is Acetate kinase (397 aa).

Asn8 lines the Mg(2+) pocket. Lys15 provides a ligand contact to ATP. Arg89 lines the substrate pocket. The Proton donor/acceptor role is filled by Asp146. ATP is bound by residues 206-210 (HLGNG), 281-283 (DLR), and 329-333 (GIGEN). Residue Glu382 coordinates Mg(2+).

This sequence belongs to the acetokinase family. Homodimer. Requires Mg(2+) as cofactor. Mn(2+) serves as cofactor.

It localises to the cytoplasm. It catalyses the reaction acetate + ATP = acetyl phosphate + ADP. Its pathway is metabolic intermediate biosynthesis; acetyl-CoA biosynthesis; acetyl-CoA from acetate: step 1/2. Its function is as follows. Catalyzes the formation of acetyl phosphate from acetate and ATP. Can also catalyze the reverse reaction. In Geobacillus sp. (strain WCH70), this protein is Acetate kinase.